A 1199-amino-acid polypeptide reads, in one-letter code: Pyruvate-flavodoxin oxidoreductase (1199 aa).

2 4Fe-4S ferredoxin-type domains span residues Glu-699–Tyr-728 and Phe-755–Leu-784. Positions 708, 711, 714, 718, 764, 767, 770, 774, 838, 841, 866, and 1103 each coordinate [4Fe-4S] cluster.

The protein belongs to the pyruvate:ferredoxin/flavodoxin oxidoreductase family. [4Fe-4S] cluster serves as cofactor.

The enzyme catalyses oxidized [flavodoxin] + pyruvate + CoA + 2 H(+) = reduced [flavodoxin] + acetyl-CoA + CO2. Its function is as follows. Oxidoreductase required for the transfer of electrons from pyruvate to flavodoxin, which reduces nitrogenase. This Nostoc sp. (strain PCC 7120 / SAG 25.82 / UTEX 2576) protein is Pyruvate-flavodoxin oxidoreductase (nifJ).